Consider the following 76-residue polypeptide: DNA-directed RNA polymerase subunit omega (76 aa).

It belongs to the RNA polymerase subunit omega family. In cyanobacteria the RNAP catalytic core is composed of 2 alpha, 1 beta, 1 beta', 1 gamma and 1 omega subunit. When a sigma factor is associated with the core the holoenzyme is formed, which can initiate transcription.

It catalyses the reaction RNA(n) + a ribonucleoside 5'-triphosphate = RNA(n+1) + diphosphate. Its function is as follows. Promotes RNA polymerase assembly. Latches the N- and C-terminal regions of the beta' subunit thereby facilitating its interaction with the beta and alpha subunits. The sequence is that of DNA-directed RNA polymerase subunit omega from Synechococcus elongatus (strain ATCC 33912 / PCC 7942 / FACHB-805) (Anacystis nidulans R2).